The chain runs to 344 residues: tRNA N6-adenosine threonylcarbamoyltransferase (344 aa).

2 residues coordinate Fe cation: histidine 111 and histidine 115. Substrate is bound by residues 134–138 (LVSGG), aspartate 167, glycine 180, and asparagine 273. Aspartate 301 contacts Fe cation.

Belongs to the KAE1 / TsaD family. The cofactor is Fe(2+).

The protein localises to the cytoplasm. The enzyme catalyses L-threonylcarbamoyladenylate + adenosine(37) in tRNA = N(6)-L-threonylcarbamoyladenosine(37) in tRNA + AMP + H(+). Functionally, required for the formation of a threonylcarbamoyl group on adenosine at position 37 (t(6)A37) in tRNAs that read codons beginning with adenine. Is involved in the transfer of the threonylcarbamoyl moiety of threonylcarbamoyl-AMP (TC-AMP) to the N6 group of A37, together with TsaE and TsaB. TsaD likely plays a direct catalytic role in this reaction. This chain is tRNA N6-adenosine threonylcarbamoyltransferase, found in Cupriavidus necator (strain ATCC 17699 / DSM 428 / KCTC 22496 / NCIMB 10442 / H16 / Stanier 337) (Ralstonia eutropha).